Here is a 101-residue protein sequence, read N- to C-terminus: uncharacterized protein (101 aa).

The chain crosses the membrane as a helical span at residues 17–37; the sequence is VIKILLISGISRIIILILAMF.

Its subcellular location is the endoplasmic reticulum membrane. This is an uncharacterized protein from Schizosaccharomyces pombe (strain 972 / ATCC 24843) (Fission yeast).